The following is a 657-amino-acid chain: UvrABC system protein B (657 aa).

A Helicase ATP-binding domain is found at 25–182 (KSIKKGNEFQ…KKLIEIQYER (158 aa)). Residue 38-45 (GVTGSGKT) coordinates ATP. Positions 91 to 114 (YYDYYQPEAYVPQTDTFIEKDASI) match the Beta-hairpin motif. Residues 429–595 (QIDDLYTEIQ…TINKEVRDLI (167 aa)) form the Helicase C-terminal domain. One can recognise a UVR domain in the interval 621 to 656 (KKLIKEYTEEMMLAAKNLQFERAAQLRDEIEELKGK).

It belongs to the UvrB family. Forms a heterotetramer with UvrA during the search for lesions. Interacts with UvrC in an incision complex.

The protein resides in the cytoplasm. In terms of biological role, the UvrABC repair system catalyzes the recognition and processing of DNA lesions. A damage recognition complex composed of 2 UvrA and 2 UvrB subunits scans DNA for abnormalities. Upon binding of the UvrA(2)B(2) complex to a putative damaged site, the DNA wraps around one UvrB monomer. DNA wrap is dependent on ATP binding by UvrB and probably causes local melting of the DNA helix, facilitating insertion of UvrB beta-hairpin between the DNA strands. Then UvrB probes one DNA strand for the presence of a lesion. If a lesion is found the UvrA subunits dissociate and the UvrB-DNA preincision complex is formed. This complex is subsequently bound by UvrC and the second UvrB is released. If no lesion is found, the DNA wraps around the other UvrB subunit that will check the other stand for damage. This is UvrABC system protein B from Clostridium botulinum (strain Alaska E43 / Type E3).